A 447-amino-acid chain; its full sequence is Cysteine--tRNA ligase (447 aa).

Cysteine 28 lines the Zn(2+) pocket. Residues 30–40 (PTVYNYIHIGN) carry the 'HIGH' region motif. 3 residues coordinate Zn(2+): cysteine 211, histidine 236, and glutamate 240. The 'KMSKS' region signature appears at 268-272 (KMSKS). Lysine 271 contacts ATP.

This sequence belongs to the class-I aminoacyl-tRNA synthetase family. Monomer. It depends on Zn(2+) as a cofactor.

The protein localises to the cytoplasm. The enzyme catalyses tRNA(Cys) + L-cysteine + ATP = L-cysteinyl-tRNA(Cys) + AMP + diphosphate. This is Cysteine--tRNA ligase from Streptococcus pyogenes serotype M6 (strain ATCC BAA-946 / MGAS10394).